A 610-amino-acid polypeptide reads, in one-letter code: Glutamine--fructose-6-phosphate aminotransferase [isomerizing] (610 aa).

Residue Cys-2 is the Nucleophile; for GATase activity of the active site. The Glutamine amidotransferase type-2 domain maps to 2–217; sequence CGIVGYVGQK…DKEFVVLTND (216 aa). SIS domains are found at residues 284 to 424 and 453 to 600; these read ITKE…LKGS and LIKE…VDKP. Catalysis depends on Lys-605, which acts as the For Fru-6P isomerization activity.

In terms of assembly, homodimer.

The protein resides in the cytoplasm. It catalyses the reaction D-fructose 6-phosphate + L-glutamine = D-glucosamine 6-phosphate + L-glutamate. Catalyzes the first step in hexosamine metabolism, converting fructose-6P into glucosamine-6P using glutamine as a nitrogen source. The polypeptide is Glutamine--fructose-6-phosphate aminotransferase [isomerizing] (Clostridium perfringens (strain 13 / Type A)).